A 411-amino-acid polypeptide reads, in one-letter code: Corticotropin-releasing factor receptor 2 (411 aa).

The not cleaved signal peptide spans 1 to 19; it reads MDAALLLSLLEANCSLALA. Topologically, residues 1-108 are extracellular; the sequence is MDAALLLSLL…EPILDDKQRK (108 aa). Asn-13, Asn-41, Asn-74, Asn-86, and Asn-94 each carry an N-linked (GlcNAc...) asparagine glycan. 3 disulfides stabilise this stretch: Cys-14–Cys-50, Cys-40–Cys-83, and Cys-64–Cys-98. Residues 109–139 traverse the membrane as a helical segment; that stretch reads YDLHYRIALIVNYLGHCVSVVALVAAFLLFL. Topologically, residues 140–146 are cytoplasmic; that stretch reads VLRSIRC. A helical transmembrane segment spans residues 147 to 171; that stretch reads LRNVIHWNLITTFILRNIAWFLLQL. At 172–185 the chain is on the extracellular side; it reads IDHEVHEGNEVWCR. A disulfide bridge connects residues Cys-184 and Cys-254. Residues 186–214 form a helical membrane-spanning segment; the sequence is CITTIFNYFVVTNFFWMFVEGCYLHTAIV. Residues 215-221 lie on the Cytoplasmic side of the membrane; it reads MTYSTEH. Residues 222–249 form a helical membrane-spanning segment; the sequence is LRKWLFLFIGWCIPCPIIIAWAVGKLYY. Residues 250-265 lie on the Extracellular side of the membrane; that stretch reads ENEQCWFGKEAGDLVD. Residues 266–291 traverse the membrane as a helical segment; it reads YIYQGPVMLVLLINFVFLFNIVRILM. The Cytoplasmic portion of the chain corresponds to 292 to 302; sequence TKLRASTTSET. Residues 303 to 327 form a helical membrane-spanning segment; that stretch reads IQYRKAVKATLVLLPLLGITYMLFF. The Extracellular portion of the chain corresponds to 328 to 334; it reads VNPGEDD. The chain crosses the membrane as a helical span at residues 335 to 364; the sequence is LSQIVFIYFNSFLQSFQGFFVSVFYCFFNG. Residues 365 to 411 lie on the Cytoplasmic side of the membrane; the sequence is EVRAALRKRWHRWQDHHALRVPVARAMSIPTSPTRISFHSIKQTAAV.

Belongs to the G-protein coupled receptor 2 family. In terms of assembly, monomer. Interacts with CRF, UCN, UCN2 and UCN3. Post-translationally, a N-glycosylation site within the signal peptide impedes its proper cleavage and function. Highly expressed in the heart. Also expressed in lungs, skeletal muscle, gastrointestinal tract, epididymis, and brain.

The protein resides in the cell membrane. G-protein coupled receptor for CRH (corticotropin-releasing factor), UCN (urocortin), UCN2 and UCN3. Has high affinity for UCN. Ligand binding causes a conformation change that triggers signaling via guanine nucleotide-binding proteins (G proteins) and down-stream effectors, such as adenylate cyclase. Promotes the activation of adenylate cyclase, leading to increased intracellular cAMP levels. This Mus musculus (Mouse) protein is Corticotropin-releasing factor receptor 2 (Crhr2).